A 699-amino-acid polypeptide reads, in one-letter code: Homeobox-leucine zipper protein HDG8 (699 aa).

Positions 1 to 31 (MDNNGGGSSGNEQYTSGDAKQNGKRTCHRHT) are disordered. Over residues 10 to 19 (GNEQYTSGDA) the composition is skewed to polar residues. The span at 22 to 31 (NGKRTCHRHT) shows a compositional bias: basic residues. The homeobox DNA-binding region spans 23–82 (GKRTCHRHTPQQIQRLEAYFKECPHPDERQRNQLCRELKLEPDQIKFWFQNKRTQSKTQE). Residues 89–149 (LLRGENETLQ…LKDHRDRISN (61 aa)) are a coiled coil. The START domain maps to 204-438 (AETDMSLLSE…LERMCERMAL (235 aa)).

It belongs to the HD-ZIP homeobox family. Class IV subfamily. In terms of assembly, interacts with ANT. In terms of tissue distribution, expressed in the embryo at early stage and in the endosperm.

It is found in the nucleus. In terms of biological role, probable transcription factor. This is Homeobox-leucine zipper protein HDG8 from Arabidopsis thaliana (Mouse-ear cress).